Consider the following 198-residue polypeptide: IMP cyclohydrolase (198 aa).

This sequence belongs to the archaeal IMP cyclohydrolase family.

It carries out the reaction IMP + H2O = 5-formamido-1-(5-phospho-D-ribosyl)imidazole-4-carboxamide. It participates in purine metabolism; IMP biosynthesis via de novo pathway; IMP from 5-formamido-1-(5-phospho-D-ribosyl)imidazole-4-carboxamide: step 1/1. Functionally, catalyzes the cyclization of 5-formylamidoimidazole-4-carboxamide ribonucleotide to IMP. The protein is IMP cyclohydrolase of Thermococcus kodakarensis (strain ATCC BAA-918 / JCM 12380 / KOD1) (Pyrococcus kodakaraensis (strain KOD1)).